The primary structure comprises 194 residues: Large ribosomal subunit protein uL22 (194 aa).

It belongs to the universal ribosomal protein uL22 family.

The sequence is that of Large ribosomal subunit protein uL22 (rpl17) from Aspergillus fumigatus (strain ATCC MYA-4609 / CBS 101355 / FGSC A1100 / Af293) (Neosartorya fumigata).